A 198-amino-acid polypeptide reads, in one-letter code: Na(+)-translocating NADH-quinone reductase subunit E (198 aa).

6 helical membrane-spanning segments follow: residues 11–31 (SVFIENMALSFFLGMCTFLAV), 35–55 (VSTAFGLGVAVTVVLGISVPV), 77–97 (FLNFITFIGVIAALVQILEMI), 110–130 (GIFLPLITVNCAIFGGVSFMV), 140–160 (VVYGIGAGTGWMLAIVALAGI), and 176–196 (LGITFITVGLMALGFMSFSGV).

It belongs to the NqrDE/RnfAE family. In terms of assembly, composed of six subunits; NqrA, NqrB, NqrC, NqrD, NqrE and NqrF.

Its subcellular location is the cell inner membrane. It catalyses the reaction a ubiquinone + n Na(+)(in) + NADH + H(+) = a ubiquinol + n Na(+)(out) + NAD(+). Functionally, NQR complex catalyzes the reduction of ubiquinone-1 to ubiquinol by two successive reactions, coupled with the transport of Na(+) ions from the cytoplasm to the periplasm. NqrA to NqrE are probably involved in the second step, the conversion of ubisemiquinone to ubiquinol. The polypeptide is Na(+)-translocating NADH-quinone reductase subunit E (Histophilus somni (strain 129Pt) (Haemophilus somnus)).